A 332-amino-acid polypeptide reads, in one-letter code: Ketol-acid reductoisomerase (NADP(+)) (332 aa).

In terms of domain architecture, KARI N-terminal Rossmann spans 2-182 (AKIYTDKDVS…GATRAGVIET (181 aa)). NADP(+)-binding positions include 25–28 (YGSQ), Ser53, and 83–86 (DMIQ). His108 is an active-site residue. Gly134 lines the NADP(+) pocket. Positions 183-328 (TFKEETETDL…RSLRDIILRG (146 aa)) constitute a KARI C-terminal knotted domain. Mg(2+)-binding residues include Asp191, Glu195, Glu227, and Glu231. Ser252 contacts substrate.

The protein belongs to the ketol-acid reductoisomerase family. Mg(2+) is required as a cofactor.

The enzyme catalyses (2R)-2,3-dihydroxy-3-methylbutanoate + NADP(+) = (2S)-2-acetolactate + NADPH + H(+). It catalyses the reaction (2R,3R)-2,3-dihydroxy-3-methylpentanoate + NADP(+) = (S)-2-ethyl-2-hydroxy-3-oxobutanoate + NADPH + H(+). It functions in the pathway amino-acid biosynthesis; L-isoleucine biosynthesis; L-isoleucine from 2-oxobutanoate: step 2/4. The protein operates within amino-acid biosynthesis; L-valine biosynthesis; L-valine from pyruvate: step 2/4. In terms of biological role, involved in the biosynthesis of branched-chain amino acids (BCAA). Catalyzes an alkyl-migration followed by a ketol-acid reduction of (S)-2-acetolactate (S2AL) to yield (R)-2,3-dihydroxy-isovalerate. In the isomerase reaction, S2AL is rearranged via a Mg-dependent methyl migration to produce 3-hydroxy-3-methyl-2-ketobutyrate (HMKB). In the reductase reaction, this 2-ketoacid undergoes a metal-dependent reduction by NADPH to yield (R)-2,3-dihydroxy-isovalerate. The chain is Ketol-acid reductoisomerase (NADP(+)) from Sulfolobus acidocaldarius (strain ATCC 33909 / DSM 639 / JCM 8929 / NBRC 15157 / NCIMB 11770).